A 193-amino-acid chain; its full sequence is Peptidyl-tRNA hydrolase (193 aa).

Y17 serves as a coordination point for tRNA. The active-site Proton acceptor is H22. TRNA-binding residues include Y68, N70, and N116.

This sequence belongs to the PTH family. In terms of assembly, monomer.

The protein resides in the cytoplasm. The enzyme catalyses an N-acyl-L-alpha-aminoacyl-tRNA + H2O = an N-acyl-L-amino acid + a tRNA + H(+). Hydrolyzes ribosome-free peptidyl-tRNAs (with 1 or more amino acids incorporated), which drop off the ribosome during protein synthesis, or as a result of ribosome stalling. In terms of biological role, catalyzes the release of premature peptidyl moieties from peptidyl-tRNA molecules trapped in stalled 50S ribosomal subunits, and thus maintains levels of free tRNAs and 50S ribosomes. The chain is Peptidyl-tRNA hydrolase from Acinetobacter baumannii (strain AB307-0294).